The following is a 597-amino-acid chain: UvrABC system protein C (597 aa).

One can recognise a GIY-YIG domain in the interval 15–93; that stretch reads DNPGVYQYYD…IKTLQPRYNV (79 aa). The region spanning 207 to 242 is the UVR domain; sequence KESLKDFKKLMNNYAQNLQFEEAQKIKEKIEVLENY.

This sequence belongs to the UvrC family. Interacts with UvrB in an incision complex.

The protein localises to the cytoplasm. Its function is as follows. The UvrABC repair system catalyzes the recognition and processing of DNA lesions. UvrC both incises the 5' and 3' sides of the lesion. The N-terminal half is responsible for the 3' incision and the C-terminal half is responsible for the 5' incision. The protein is UvrABC system protein C of Flavobacterium johnsoniae (strain ATCC 17061 / DSM 2064 / JCM 8514 / BCRC 14874 / CCUG 350202 / NBRC 14942 / NCIMB 11054 / UW101) (Cytophaga johnsonae).